The chain runs to 92 residues: Small ribosomal subunit protein uS19c (92 aa).

It belongs to the universal ribosomal protein uS19 family.

It localises to the plastid. The protein resides in the chloroplast. Its function is as follows. Protein S19 forms a complex with S13 that binds strongly to the 16S ribosomal RNA. The protein is Small ribosomal subunit protein uS19c of Cucumis sativus (Cucumber).